We begin with the raw amino-acid sequence, 237 residues long: Lectin (237 aa).

Asn-69 carries an N-linked (GlcNAc...) asparagine glycan. Blocked amino end (Ile) is present on Ile-106. Positions 115 and 117 each coordinate Mn(2+). Residues Asp-117, Tyr-120, Asn-122, and Asp-127 each contribute to the Ca(2+) site. Mn(2+) contacts are provided by Asp-127 and His-132.

Belongs to the leguminous lectin family. In terms of assembly, tetramer of two alpha and two beta chains. Post-translationally, the N-terminus of alpha chain is blocked. The alpha and beta chains are produced by proteolytic processing, with probably the loss of intervening amino acid(s).

Functionally, D-mannose/D-glucose-binding lectin. Requires Ca(2+) and Mn(2+) ions for full activity. This is Lectin from Lablab purpureus (Hyacinth bean).